Here is a 717-residue protein sequence, read N- to C-terminus: MDAVDSTRAFVKGVKRVIIKVGTAVVTRADGRLALGRLGALCEQIHELNSQGFEVILVTSGAVGVGRQRLRYRKLVNSSFADLQKPQIELDGKACAAVGQNGLLALYDTLFSQLDVTSAQLLVTDNDFRDPEFRKQLTETVESLLNLKVIPIFNENDAVSTRKAPYEDASGIFWDNDSLAALLALELKADLLVLLSDVEGLYSGPPSDPQSKLIHTYIKEMFEGLITFGDKSRVGRGGMTAKVKAAVYAAHAGIPVVITSGYATNNIIKVLQGERIGTLFHRDAQKWAPVGDVGARDMAVAARESSRRLQAMSPQDRSKILLDVADALEANEKLIRIENEADLAAAQQAGYEKSLISRLALKSGKISSLAKSIRVLANMEEPIGHVLKRTEITDGLVLEKTSSPLGVLLIIFESRPDALVQIASLAIRSGNGLVLKGGKEAKRSNAILHKVITSAIPENVGPRLIGLVTSREEIPDLLKLDDVIDLVIPRGSNKLVSQIKESTKIPVLGHADGICHVYVDKSANMDMAKKVVLDAKTDYPAACNAMETLLVHKDLVQNGCLDELIVELQIKGVVIHGGPRASSLLHIPEARSLHHEYSSLACTIEIVDDVYAAIDHIHRHGSAHTDSIITEDHEVAEIFLRQVDSSSVLHNASTRFSDGARFGLGAEVGISTSRIHARGPVGVEGLLTTRWIARGSGQVVDGDKGIVYTHKDLTSHA.

Residues 1 to 296 form a glutamate 5-kinase region; sequence MDAVDSTRAF…WAPVGDVGAR (296 aa). The substrate site is built by Ser-60, Asp-157, and Asn-176. ATP contacts are provided by residues 196 to 197 and 236 to 242; these read SD and RGGMTAK. Residues 297–717 are gamma-glutamyl phosphate reductase; sequence DMAVAARESS…YTHKDLTSHA (421 aa).

The protein in the N-terminal section; belongs to the glutamate 5-kinase family. It in the C-terminal section; belongs to the gamma-glutamyl phosphate reductase family. Expressed at high levels in leaves and is inducible in roots subjected to salt stress.

It catalyses the reaction L-glutamate + ATP = L-glutamyl 5-phosphate + ADP. It carries out the reaction L-glutamate 5-semialdehyde + phosphate + NADP(+) = L-glutamyl 5-phosphate + NADPH + H(+). It functions in the pathway amino-acid biosynthesis; L-proline biosynthesis; L-glutamate 5-semialdehyde from L-glutamate: step 1/2. Its pathway is amino-acid biosynthesis; L-proline biosynthesis; L-glutamate 5-semialdehyde from L-glutamate: step 2/2. Feedback regulated by proline. P5CS plays a key role in proline biosynthesis, leading to osmoregulation in plants. The polypeptide is Delta-1-pyrroline-5-carboxylate synthase (Actinidia deliciosa (Kiwi)).